A 639-amino-acid chain; its full sequence is Uridine permease (639 aa).

The interval 1–37 (MPVSDSGFDNSSKTMKDDTIPTEDYEEITKESEMGDA) is disordered. Topologically, residues 1–162 (MPVSDSGFDN…LQLGLNWWQT (162 aa)) are cytoplasmic. A Phosphothreonine modification is found at Thr54. Ser56 carries the phosphoserine modification. A helical transmembrane segment spans residues 163–180 (WICIWVGYTFVAFFLILG). Residues 181 to 200 (SKVGNNYHISFPISSRVSFG) are Extracellular-facing. A helical transmembrane segment spans residues 201–225 (IYFSIWIVINRVVMACVWNSTLAYI). Residues 226 to 259 (GSQCVQLMLKAIFGTNLNTRIKDTIKNPNLTNFE) lie on the Cytoplasmic side of the membrane. The helical transmembrane segment at 260–276 (FMCFMVFWVACLPFLWF) threads the bilayer. Residues 277 to 283 (PPDKLRH) lie on the Extracellular side of the membrane. Residues 284-305 (IFALKSAITPFAAFGFLIWTLC) form a helical membrane-spanning segment. Topologically, residues 306-367 (KAKGHLALGS…KTYKSSVYSQ (62 aa)) are cytoplasmic. The helical transmembrane segment at 368-392 (LIALPVCYAIISLIGILSVSAAYTL) threads the bilayer. Residues 393–416 (YGVNYWSPLDILNRYLDNYTSGNR) are Extracellular-facing. Residues 417–435 (AGVFLISFIFAFDQLGANL) traverse the membrane as a helical segment. Residues 436–460 (SGNSIPAGTDLTALLPKFINIRRGS) lie on the Cytoplasmic side of the membrane. A helical transmembrane segment spans residues 461–477 (YICALISLAICPWDLLS). Residues 478–483 (SSSKFT) are Extracellular-facing. A helical membrane pass occupies residues 484 to 507 (TALAAYAVFLSAIAGVISADYFIV). Topologically, residues 508-537 (RKGYVNIFHCYTDKPGSYYMYNKYGTNWRA) are cytoplasmic. A helical membrane pass occupies residues 538 to 562 (VVAYIFGIAPNFAGFLGSVGVSVPI). The Extracellular portion of the chain corresponds to 563-572 (GAMKVYYLNY). Residues 573–590 (FVGYLLAALSYCILVYFY) form a helical membrane-spanning segment. At 591 to 639 (PIKGIPGDAKITDRKWLEEWVEVEEFGTEREAFEEYGGVSTGYEKIRYI) the chain is on the cytoplasmic side. Lys635 participates in a covalent cross-link: Glycyl lysine isopeptide (Lys-Gly) (interchain with G-Cter in ubiquitin).

Belongs to the purine-cytosine permease (2.A.39) family.

Its subcellular location is the membrane. In terms of biological role, high-affinity transport of uridine. The sequence is that of Uridine permease (FUI1) from Saccharomyces cerevisiae (strain ATCC 204508 / S288c) (Baker's yeast).